A 102-amino-acid polypeptide reads, in one-letter code: uncharacterized protein (102 aa).

This is an uncharacterized protein from Saccharomyces cerevisiae (strain ATCC 204508 / S288c) (Baker's yeast).